We begin with the raw amino-acid sequence, 296 residues long: Ribonuclease HIII (296 aa).

One can recognise an RNase H type-2 domain in the interval 80-296; the sequence is LALIGSDEVG…NTKKAYQRLK (217 aa). Asp-86, Glu-87, and Asp-191 together coordinate a divalent metal cation.

The protein belongs to the RNase HII family. RnhC subfamily. Mn(2+) serves as cofactor. The cofactor is Mg(2+).

It is found in the cytoplasm. The catalysed reaction is Endonucleolytic cleavage to 5'-phosphomonoester.. Its function is as follows. Endonuclease that specifically degrades the RNA of RNA-DNA hybrids. The sequence is that of Ribonuclease HIII from Streptococcus thermophilus (strain ATCC BAA-250 / LMG 18311).